Here is a 41-residue protein sequence, read N- to C-terminus: Mu-conotoxin pn4c (41 aa).

Residues 1-24 (DQPAERMQDDISSEHHPFFDPVKR) constitute a propeptide that is removed on maturation.

This sequence belongs to the conotoxin M superfamily. In terms of processing, contains 3 disulfide bonds. They are not added, since framework IV presents two different connectivities (I-V, II-III, IV-VI and I-III, II-V, IV-VI). Expressed by the venom duct.

The protein resides in the secreted. Mu-conotoxins block voltage-gated sodium channels (Nav). Blocks reversibly sodium channels in molluskan neurons, but has no effect on sodium currents in bovine chromaffin cells or in rat brain synaptosomes. Induces paralysis in mollusks (C.retripictus). The protein is Mu-conotoxin pn4c of Conus pennaceus (Feathered cone).